A 426-amino-acid chain; its full sequence is Serine--tRNA ligase (426 aa).

230–232 (TAE) serves as a coordination point for L-serine. An ATP-binding site is contributed by 261 to 263 (RSE). Glutamate 284 contributes to the L-serine binding site. 348 to 351 (EISS) contributes to the ATP binding site. Residue serine 384 participates in L-serine binding.

The protein belongs to the class-II aminoacyl-tRNA synthetase family. Type-1 seryl-tRNA synthetase subfamily. As to quaternary structure, homodimer. The tRNA molecule binds across the dimer.

It localises to the cytoplasm. It carries out the reaction tRNA(Ser) + L-serine + ATP = L-seryl-tRNA(Ser) + AMP + diphosphate + H(+). The catalysed reaction is tRNA(Sec) + L-serine + ATP = L-seryl-tRNA(Sec) + AMP + diphosphate + H(+). It functions in the pathway aminoacyl-tRNA biosynthesis; selenocysteinyl-tRNA(Sec) biosynthesis; L-seryl-tRNA(Sec) from L-serine and tRNA(Sec): step 1/1. Its function is as follows. Catalyzes the attachment of serine to tRNA(Ser). Is also able to aminoacylate tRNA(Sec) with serine, to form the misacylated tRNA L-seryl-tRNA(Sec), which will be further converted into selenocysteinyl-tRNA(Sec). This chain is Serine--tRNA ligase, found in Novosphingobium aromaticivorans (strain ATCC 700278 / DSM 12444 / CCUG 56034 / CIP 105152 / NBRC 16084 / F199).